We begin with the raw amino-acid sequence, 171 residues long: Ribosome maturation factor RimM (171 aa).

The 73-residue stretch at 96 to 168 (EDGFYDHELE…TATITPPEGL (73 aa)) folds into the PRC barrel domain.

This sequence belongs to the RimM family. As to quaternary structure, binds ribosomal protein uS19.

It localises to the cytoplasm. Its function is as follows. An accessory protein needed during the final step in the assembly of 30S ribosomal subunit, possibly for assembly of the head region. Essential for efficient processing of 16S rRNA. May be needed both before and after RbfA during the maturation of 16S rRNA. It has affinity for free ribosomal 30S subunits but not for 70S ribosomes. The protein is Ribosome maturation factor RimM of Corynebacterium glutamicum (strain R).